Reading from the N-terminus, the 647-residue chain is 1-deoxy-D-xylulose-5-phosphate synthase (647 aa).

Thiamine diphosphate is bound by residues His88 and Gly129 to Ala131. Residue Asp160 participates in Mg(2+) binding. Thiamine diphosphate contacts are provided by residues Gly161 to Ala162, Asn189, Tyr300, and Glu377. Position 189 (Asn189) interacts with Mg(2+).

Belongs to the transketolase family. DXPS subfamily. As to quaternary structure, homodimer. Mg(2+) is required as a cofactor. Thiamine diphosphate serves as cofactor.

The enzyme catalyses D-glyceraldehyde 3-phosphate + pyruvate + H(+) = 1-deoxy-D-xylulose 5-phosphate + CO2. It functions in the pathway metabolic intermediate biosynthesis; 1-deoxy-D-xylulose 5-phosphate biosynthesis; 1-deoxy-D-xylulose 5-phosphate from D-glyceraldehyde 3-phosphate and pyruvate: step 1/1. Its function is as follows. Catalyzes the acyloin condensation reaction between C atoms 2 and 3 of pyruvate and glyceraldehyde 3-phosphate to yield 1-deoxy-D-xylulose-5-phosphate (DXP). The protein is 1-deoxy-D-xylulose-5-phosphate synthase of Dehalococcoides mccartyi (strain CBDB1).